The following is a 255-amino-acid chain: Electron transfer flavoprotein subunit beta (255 aa).

Ala2 is subject to N-acetylalanine. Residues Ala9, 39-42 (NPFC), Cys66, and 123-134 (GKQAIDDDCNQT) contribute to the AMP site. The interval 183-205 (ADLRLNEPRYATLPNIMKAKKKK) is recognition loop. Lys200 carries the post-translational modification N6,N6,N6-trimethyllysine; by ETFBKMT; alternate. Position 200 is an N6-acetyllysine; alternate (Lys200). N6-methyllysine; alternate is present on Lys200. Position 203 is an N6,N6,N6-trimethyllysine; by ETFBKMT (Lys203). The residue at position 210 (Lys210) is an N6-acetyllysine; alternate. N6-succinyllysine; alternate is present on Lys210. A phosphoserine mark is found at Ser223 and Ser226. Lys238 is modified (N6-acetyllysine). Residue Lys248 is modified to N6-acetyllysine; alternate. Lys248 carries the post-translational modification N6-succinyllysine; alternate.

The protein belongs to the ETF beta-subunit/FixA family. Heterodimer composed of ETFA and ETFB. Identified in a complex that contains ETFA, ETFB and ETFRF1. Interacts with ACADM. Post-translationally, methylated. Trimethylation at Lys-200 and Lys-203 may negatively regulate the activity in electron transfer from acyl-CoA dehydrogenases.

Its subcellular location is the mitochondrion matrix. Its function is as follows. Heterodimeric electron transfer flavoprotein that accepts electrons from several mitochondrial dehydrogenases, including acyl-CoA dehydrogenases, glutaryl-CoA and sarcosine dehydrogenase. It transfers the electrons to the main mitochondrial respiratory chain via ETF-ubiquinone oxidoreductase. Required for normal mitochondrial fatty acid oxidation and normal amino acid metabolism. ETFB binds an AMP molecule that probably has a purely structural role. In Mus musculus (Mouse), this protein is Electron transfer flavoprotein subunit beta.